The primary structure comprises 1158 residues: MINVITGRQVDNLQNEIIDQAVKSYYQDKRHDVFIIVPNHIKFTTEVRALSKLSVLTNKKQVAVNKLHILSFSRLAWYFLRDEAIKLPQILDDAASVMLLEQIVKDHQDELKLFQNQTQVTSGALRQMYEAILSVRAGNIELDNIDEKKLNEETSYKIHDLRIIYDEFIERLSEKFATKDEMQLLLNQFLAKSNNLSTMEFYFSDFSHFSLQELTSVRLISKKAKNTTLAFKTKIGKIDNNAEPGDYDYVVQRTIGQLEHFWQNQQLDYQTQEYPLTQTSPSSLLNGVWTKTSGFDERLSKFLQPVKADSRYAEAYFVARTIYQQVALNNYRYQDFLVLAPNLSEYETYLTPILRQNQIPFFNDLQREMKYHPLVVAVENLQQIFKRGFQTDNVIALMKTQLFIPDWYKNSARYQNDVDLLENFVLAHGIKGKLWTKSLKSFVDADVIALDKSEKEVEDLDRLRDYFIDALTKFFEQLDKEEDPQAGVTVFWNFLIKNRVAKRLESWRKEANDTGDLQLAQQPEQVWSTLTDLLKDYLLVANKFSVDQFFDLLISGFSEANFSQIPSTLDAVNISELGMVQGQGYKQVFIIGATSTNLPQIEKIPGFFSSENLEQLNEGNEANGYLEDQQKINNLDQNYQFGNALSLASDKIYISYPVINTANEQLEPSIFYKQLLKLTRADEFAQHDLPQNNGEVLTFITNPEASLGYLTYLKNKAATDVDSLLKMTEEKIGEVAKNVLEGSSFKNIPQDLSPELAQQLYGDRIETSVSQLETYYQNSFEYFLNYGLHLKKRFENELDVIQAGNYYHETFDYLVKRIKEKKLNFADLTEEKLGELLIEVREELKEKGRYRQLLNDPFNKYLFHKLDQTTANVAHYWHSNVNKTTFRPQYSELSFGKNQKVSGLSYSWKDDNNKKKIVDLRGKMDRVDLAQVNDRVLGEVIDYKSSAKKFDLGLFANGISMQMISYLEVLKNNNKFFAQGKDLDVLGAFYQNITSSLERLSSEKMILSNYQIKDLAKESTKKLMYNGILIADEEMLDLIEPGMEKDRAVSDLYTSVKRKVNGYISWPQNQSFTPDQLDLLLAYNSYLIKNAGNEILSGKIELDPYSYGQQTSLTYSDFKDIFFFDAMLKENNYHKIKSIDKKTLLTLIREKLDLDGEE.

This sequence belongs to the helicase family. AddB/RexB type 2 subfamily. Heterodimer of AddA and RexB. The cofactor is Mg(2+).

In terms of biological role, the heterodimer acts as both an ATP-dependent DNA helicase and an ATP-dependent, dual-direction single-stranded exonuclease. Recognizes the chi site generating a DNA molecule suitable for the initiation of homologous recombination. This subunit has 5' -&gt; 3' nuclease activity but not helicase activity. The sequence is that of ATP-dependent helicase/deoxyribonuclease subunit B from Lactobacillus johnsonii (strain CNCM I-12250 / La1 / NCC 533).